Reading from the N-terminus, the 552-residue chain is Chromosomal replication initiator protein DnaA (552 aa).

The tract at residues Met1 to Thr90 is domain I, interacts with DnaA modulators. Residues Thr90–Gly210 are domain II. Residues Glu113–Asn213 form a disordered region. The span at Pro155 to Gln170 shows a compositional bias: low complexity. Residues Ser211–Ala427 are domain III, AAA+ region. Gly255, Gly257, Lys258, and Thr259 together coordinate ATP. Residues Ser428–Ala552 are domain IV, binds dsDNA.

The protein belongs to the DnaA family. In terms of assembly, oligomerizes as a right-handed, spiral filament on DNA at oriC.

The protein localises to the cytoplasm. In terms of biological role, plays an essential role in the initiation and regulation of chromosomal replication. ATP-DnaA binds to the origin of replication (oriC) to initiate formation of the DNA replication initiation complex once per cell cycle. Binds the DnaA box (a 9 base pair repeat at the origin) and separates the double-stranded (ds)DNA. Forms a right-handed helical filament on oriC DNA; dsDNA binds to the exterior of the filament while single-stranded (ss)DNA is stabiized in the filament's interior. The ATP-DnaA-oriC complex binds and stabilizes one strand of the AT-rich DNA unwinding element (DUE), permitting loading of DNA polymerase. After initiation quickly degrades to an ADP-DnaA complex that is not apt for DNA replication. Binds acidic phospholipids. The chain is Chromosomal replication initiator protein DnaA from Corynebacterium diphtheriae (strain ATCC 700971 / NCTC 13129 / Biotype gravis).